We begin with the raw amino-acid sequence, 258 residues long: Putative [LysW]-aminoadipate/[LysW]-glutamate kinase (258 aa).

Substrate contacts are provided by residues 33-34 (GG), Arg60, and Asn164.

This sequence belongs to the acetylglutamate kinase family. LysZ subfamily.

It is found in the cytoplasm. It catalyses the reaction [amino-group carrier protein]-C-terminal-N-(1,4-dicarboxybutan-1-yl)-L-glutamine + ATP = [amino-group carrier protein]-C-terminal-N-(1-carboxy-5-phosphooxy-5-oxopentan-1-yl)-L-glutamine + ADP. The enzyme catalyses [amino-group carrier protein]-C-terminal-gamma-(L-glutamyl)-L-glutamate + ATP = [amino-group carrier protein]-C-terminal-gamma-(5-phospho-L-glutamyl)-L-glutamate + ADP. It participates in amino-acid biosynthesis; L-lysine biosynthesis via AAA pathway; L-lysine from L-alpha-aminoadipate (Thermus route): step 2/5. Its pathway is amino-acid biosynthesis; L-arginine biosynthesis. Its function is as follows. Involved in both the arginine and lysine biosynthetic pathways. Phosphorylates the LysW-bound precursors glutamate (for arginine biosynthesis), respectively alpha-aminoadipate (for lysine biosynthesis). The chain is Putative [LysW]-aminoadipate/[LysW]-glutamate kinase from Caldivirga maquilingensis (strain ATCC 700844 / DSM 13496 / JCM 10307 / IC-167).